The primary structure comprises 376 residues: Alcohol dehydrogenase class-3 (376 aa).

Residues cysteine 40, histidine 62, cysteine 92, cysteine 95, cysteine 98, cysteine 106, and cysteine 170 each coordinate Zn(2+).

This sequence belongs to the zinc-containing alcohol dehydrogenase family. Class-III subfamily. As to quaternary structure, homodimer. The cofactor is Zn(2+).

The protein resides in the cytoplasm. The enzyme catalyses a primary alcohol + NAD(+) = an aldehyde + NADH + H(+). It carries out the reaction a secondary alcohol + NAD(+) = a ketone + NADH + H(+). It catalyses the reaction S-(hydroxymethyl)glutathione + NADP(+) = S-formylglutathione + NADPH + H(+). The catalysed reaction is S-(hydroxymethyl)glutathione + NAD(+) = S-formylglutathione + NADH + H(+). In terms of biological role, oxidizes long-chain aliphatic alcohols, long-chain hydroxylated fatty acids and S-hydroxymethylglutathione (hmGSH) in increasing order of preference. Shows little or no activity with short-chain aliphatic alcohols. This chain is Alcohol dehydrogenase class-3 (adhI), found in Cereibacter sphaeroides (strain ATCC 17023 / DSM 158 / JCM 6121 / CCUG 31486 / LMG 2827 / NBRC 12203 / NCIMB 8253 / ATH 2.4.1.) (Rhodobacter sphaeroides).